A 94-amino-acid polypeptide reads, in one-letter code: Acylphosphatase (94 aa).

An Acylphosphatase-like domain is found at 7-94 (AVQARVYGRV…TAPGDFRIVA (88 aa)). Active-site residues include arginine 22 and asparagine 40.

Belongs to the acylphosphatase family.

It carries out the reaction an acyl phosphate + H2O = a carboxylate + phosphate + H(+). In Mesorhizobium japonicum (strain LMG 29417 / CECT 9101 / MAFF 303099) (Mesorhizobium loti (strain MAFF 303099)), this protein is Acylphosphatase (acyP).